The following is a 372-amino-acid chain: B2 bradykinin receptor (372 aa).

Residues 1 to 34 (MFNITSQVSALNATLAQGNSCLDAEWWSWLNTIQ) are Extracellular-facing. N-linked (GlcNAc...) asparagine glycosylation is found at N3 and N12. A helical membrane pass occupies residues 35–58 (APFLWVLFVLAVLENIFVLSVFFL). Residues 59-67 (HKSSCTVAE) lie on the Cytoplasmic side of the membrane. Residues 68-92 (IYLGNLAVADLILAFGLPFWAITIA) form a helical membrane-spanning segment. The Extracellular segment spans residues 93-105 (NNFDWLFGEVLCR). C104 and C185 are joined by a disulfide. The helical transmembrane segment at 106–127 (MVNTMIQMNMYSSICFLMLVSI) threads the bilayer. Over 128 to 149 (DRYLALVKTMSMGRMRGVRWAK) the chain is Cytoplasmic. A Phosphotyrosine modification is found at Y130. Residues 150–172 (LYSLVIWGCALLLSSPMLVFRTM) traverse the membrane as a helical segment. Over 173 to 195 (KDYRDEGHNVTACLIIYPSLTWQ) the chain is Extracellular. N181 carries an N-linked (GlcNAc...) asparagine glycan. The helical transmembrane segment at 196–222 (VFTNVLLNLVGFLLPLSIITFCTVQIM) threads the bilayer. The Cytoplasmic portion of the chain corresponds to 223 to 241 (QVLRNNEMQKFKEIQTERR). A helical membrane pass occupies residues 242–266 (ATVLVLAVLLLFVVCWLPFQIGTFL). Residues 267–284 (DTLRLLGFLPGCWEHVID) lie on the Extracellular side of the membrane. A helical membrane pass occupies residues 285 to 308 (LITQISSYLAYSNSCLNPLVYVIV). Topologically, residues 309–364 (GKRFRKKSREVYHGLCRSGGCVSEPAQSENSMGTLRTSISVDRQIHKLQDWARSSS) are cytoplasmic. A Phosphotyrosine modification is found at Y320. A lipid anchor (S-palmitoyl cysteine) is attached at C324. S339 bears the Phosphoserine mark. The residue at position 342 (T342) is a Phosphothreonine. S346 and S348 each carry phosphoserine; by GRK6.

This sequence belongs to the G-protein coupled receptor 1 family. Bradykinin receptor subfamily. BDKRB2 sub-subfamily. Forms a complex with PECAM1 and GNAQ. Interacts with PECAM1.

The protein resides in the cell membrane. Its function is as follows. Receptor for bradykinin. It is associated with G proteins that activate a phosphatidylinositol-calcium second messenger system. This is B2 bradykinin receptor (BDKRB2) from Cavia porcellus (Guinea pig).